Reading from the N-terminus, the 510-residue chain is Probable inorganic carbon transporter subunit DabB (510 aa).

Helical transmembrane passes span 9-29 (TLLTLFFIALSASWLSGLLFL), 37-57 (FVHIHIGIAALPSLVSLLALV), 68-88 (WHLDTLAWLMAFFVLTIGLII), 105-122 (YFALFTFTTGVSSVAWLS), 125-145 (LRFMIMCWGATLIGLVLLIGL), 158-178 (ISGYLFTISWIALLSAIIWLF), 204-224 (TGINLLIIVAVMIPAAQWPFQ), 226-246 (WLIESAVAPTPVSAIMHAGLV), 266-286 (QIILLIFSSISVLIGTGISLV), 303-323 (GFMLIQCALGAYLAAVIHLIL), 355-375 (LWMIVGRVLGLFIAIAFWFIT), 382-402 (LVSALILGWSLYFSWKQLVVF), 410-430 (IAGLIVLIGFSLIYFTVHNSL), and 446-466 (APAVIFVICILLFSSVICTFV).

This sequence belongs to the inorganic carbon transporter (TC 9.A.2) DabB family. Forms a complex with DabA.

The protein localises to the cell membrane. Functionally, part of an energy-coupled inorganic carbon pump. Expression of both dabA and dabB (DA2) restores growth in ambient air to E.coli deleted of its carbonic anhydrase genes (called CAfree, deletion of 'can' and 'cynT'). The protein is Probable inorganic carbon transporter subunit DabB of Bacillus anthracis.